Consider the following 609-residue polypeptide: Membrane protein insertase YidC (609 aa).

Residues 9 to 29 form a helical membrane-spanning segment; that stretch reads IIAIVLSGLILIAWQYFYNIP. A disordered region spans residues 35-63; that stretch reads RAAQQAQSQTAKSPTEPTPNSPKPDHPAA. The next 4 membrane-spanning stretches (helical) occupy residues 375 to 395, 449 to 469, 507 to 527, and 546 to 566; these read VFGN…AIFF, LPMV…FVTI, LLGP…TMWF, and WMPV…VIYW.

This sequence belongs to the OXA1/ALB3/YidC family. Type 1 subfamily. As to quaternary structure, interacts with the Sec translocase complex via SecD. Specifically interacts with transmembrane segments of nascent integral membrane proteins during membrane integration.

Its subcellular location is the cell inner membrane. Functionally, required for the insertion and/or proper folding and/or complex formation of integral membrane proteins into the membrane. Involved in integration of membrane proteins that insert both dependently and independently of the Sec translocase complex, as well as at least some lipoproteins. Aids folding of multispanning membrane proteins. The sequence is that of Membrane protein insertase YidC from Nitrobacter hamburgensis (strain DSM 10229 / NCIMB 13809 / X14).